The sequence spans 261 residues: MFEARLVQGSILKKVLEALKDLINEACWDISSSGVNLQSMDSSHVSLVQLTLRSEGFDTYRCDRNLAMGVNLTSMSKILKCAGNEDIITLRAEDNADTLALVFEAPNQEKVSDYEMKLMDLDVEQLGIPEQEYSCVVKMPSGEFARICRDLSHIGDAVVISCAKDGVKFSASGELGNGNIKLSQTSNVDKEEEAVTIEMNEPVQLTFALRYLNFFTKATPLSSTVTLSMSADVPLVVEYKIADMGHLKYYLAPKIEDEEGS.

Residues 7–100 (VQGSILKKVL…RAEDNADTLA (94 aa)) form an interaction with NUDT15 region. Lysine 14, lysine 77, and lysine 80 each carry N6-acetyllysine. Residues 61–80 (RCDRNLAMGVNLTSMSKILK) mediate DNA binding. An intrachain disulfide couples cysteine 135 to cysteine 162. A Glycyl lysine isopeptide (Lys-Gly) (interchain with G-Cter in SUMO2); alternate cross-link involves residue lysine 164. Lysine 164 participates in a covalent cross-link: Glycyl lysine isopeptide (Lys-Gly) (interchain with G-Cter in ubiquitin); alternate. Tyrosine 211 carries the post-translational modification Phosphotyrosine; by EGFR. Lysine 248 carries the post-translational modification N6-acetyllysine. Lysine 254 participates in a covalent cross-link: Glycyl lysine isopeptide (Lys-Gly) (interchain with G-Cter in SUMO2).

It belongs to the PCNA family. In terms of assembly, homotrimer. Interacts with p300/EP300; the interaction occurs on chromatin in UV-irradiated damaged cells. Interacts with CREBBP (via transactivation domain and C-terminus); the interaction occurs on chromatin in UV-irradiated damaged cells. Directly interacts with POLD1, POLD3 and POLD4 subunits of the DNA polymerase delta complex, POLD3 being the major interacting partner; the interaction with POLD3 is inhibited by CDKN1A/p21(CIP1). Forms a complex with activator 1 heteropentamer in the presence of ATP. Interacts with EXO1, POLH, POLK, DNMT1, ERCC5, FEN1, CDC6 and POLDIP2. Interacts with POLB. Interacts with APEX2; this interaction is triggered by reactive oxygen species and increased by misincorporation of uracil in nuclear DNA. Forms a ternary complex with DNTTIP2 and core histone. Interacts with KCTD10 and PPP1R15A. Interacts with SMARCA5/SNF2H. Interacts with BAZ1B/WSTF; the interaction is direct and is required for BAZ1B/WSTF binding to replication foci during S phase. Interacts with HLTF and SHPRH. Interacts with NUDT15; this interaction is disrupted in response to UV irradiation and acetylation. Interacts with CDKN1A/p21(CIP1) and CDT1; interacts via their PIP-box which also recruits the DCX(DTL) complex. The interaction with CDKN1A inhibits POLD3 binding. Interacts with DDX11. Interacts with EGFR; positively regulates PCNA. Interacts with PARPBP. Interacts (when ubiquitinated) with SPRTN; leading to enhance RAD18-mediated PCNA ubiquitination. Interacts (when polyubiquitinated) with ZRANB3. Interacts with SMARCAD1. Interacts with CDKN1C. Interacts with PCLAF (via PIP-box). Interacts with RTEL1 (via PIP-box); the interaction is direct and essential for the suppression of telomere fragility. Interacts with FAM111A (via PIP-box); the interaction is direct and required for PCNA loading on chromatin binding. Interacts with LIG1. Interacts with SETMAR. Interacts with ANKRD17. Interacts with FBXO18/FBH1 (via PIP-box); the interaction recruits the DCX(DTL) complex and promotes ubiquitination and degradation of FBXO18/FBH1. Interacts with POLN. Interacts with SDE2 (via PIP-box); the interaction is direct and prevents ultraviolet light induced monoubiquitination. Component of the replisome complex composed of at least DONSON, MCM2, MCM7, PCNA and TICRR; interaction at least with PCNA occurs during DNA replication. Interacts with MAPK15; the interaction is chromatin binding dependent and prevents MDM2-mediated PCNA destruction by inhibiting the association of PCNA with MDM2. Interacts with PARP10 (via PIP-box). Interacts with DDI2. Interacts with HMCES (via PIP-box). Interacts with TRAIP (via PIP-box). Interacts with UHRF2. Interacts with ALKBH2; this interaction is enhanced during the S-phase of the cell cycle. Interacts with ATAD5; the interaction promotes USP1-mediated PCNA deubiquitination. Interacts with DNA damage up-regulated protein DDUP. Interacts (when phosphorylated) with GRB2. Interacts with ANG. Interacts with nuclear UNG (isoform 2); this interaction mediates UNG recruitment to S-phase replication foci. Interacts with ERCC6L2 (via an atypical PIP-box); this interaction facilitates cenrtomeric localization of ERCC6L2. (Microbial infection) Interacts with herpes virus 8 protein LANA1. Post-translationally, phosphorylated. Phosphorylation at Tyr-211 by EGFR stabilizes chromatin-associated PCNA. Acetylated by CREBBP and p300/EP300; preferentially acetylated by CREBBP on Lys-80, Lys-13 and Lys-14 and on Lys-77 by p300/EP300 upon loading on chromatin in response to UV irradiation. Lysine acetylation disrupts association with chromatin, hence promoting PCNA ubiquitination and proteasomal degradation in response to UV damage in a CREBBP- and EP300-dependent manner. Acetylation disrupts interaction with NUDT15 and promotes degradation. In terms of processing, ubiquitinated. Following DNA damage, can be either monoubiquitinated to stimulate direct bypass of DNA lesions by specialized DNA polymerases or polyubiquitinated to promote recombination-dependent DNA synthesis across DNA lesions by template switching mechanisms. Following induction of replication stress, monoubiquitinated by the UBE2B-RAD18 complex on Lys-164, leading to recruit translesion (TLS) polymerases, which are able to synthesize across DNA lesions in a potentially error-prone manner. An error-free pathway also exists and requires non-canonical polyubiquitination on Lys-164 through 'Lys-63' linkage of ubiquitin moieties by the E2 complex UBE2N-UBE2V2 and the E3 ligases, HLTF, RNF8 and SHPRH. This error-free pathway, also known as template switching, employs recombination mechanisms to synthesize across the lesion, using as a template the undamaged, newly synthesized strand of the sister chromatid. Monoubiquitination at Lys-164 also takes place in undamaged proliferating cells, and is mediated by the DCX(DTL) complex, leading to enhance PCNA-dependent translesion DNA synthesis. Sumoylated during S phase. Post-translationally, methylated on glutamate residues by ARMT1/C6orf211.

The protein resides in the nucleus. Functionally, auxiliary protein of DNA polymerase delta and epsilon, is involved in the control of eukaryotic DNA replication by increasing the polymerase's processibility during elongation of the leading strand. Induces a robust stimulatory effect on the 3'-5' exonuclease and 3'-phosphodiesterase, but not apurinic-apyrimidinic (AP) endonuclease, APEX2 activities. Has to be loaded onto DNA in order to be able to stimulate APEX2. Plays a key role in DNA damage response (DDR) by being conveniently positioned at the replication fork to coordinate DNA replication with DNA repair and DNA damage tolerance pathways. Acts as a loading platform to recruit DDR proteins that allow completion of DNA replication after DNA damage and promote postreplication repair: Monoubiquitinated PCNA leads to recruitment of translesion (TLS) polymerases, while 'Lys-63'-linked polyubiquitination of PCNA is involved in error-free pathway and employs recombination mechanisms to synthesize across the lesion. This chain is Proliferating cell nuclear antigen (PCNA), found in Homo sapiens (Human).